The sequence spans 951 residues: Bifunctional glutamine synthetase adenylyltransferase/adenylyl-removing enzyme (951 aa).

The segment at 1 to 440 (MLPLPSELQI…VFDDLIGDET (440 aa)) is adenylyl removase. The tract at residues 449 to 951 (HGLYKSLWQD…WLAANDANVS (503 aa)) is adenylyl transferase.

Belongs to the GlnE family. Mg(2+) serves as cofactor.

It carries out the reaction [glutamine synthetase]-O(4)-(5'-adenylyl)-L-tyrosine + phosphate = [glutamine synthetase]-L-tyrosine + ADP. The enzyme catalyses [glutamine synthetase]-L-tyrosine + ATP = [glutamine synthetase]-O(4)-(5'-adenylyl)-L-tyrosine + diphosphate. Functionally, involved in the regulation of glutamine synthetase GlnA, a key enzyme in the process to assimilate ammonia. When cellular nitrogen levels are high, the C-terminal adenylyl transferase (AT) inactivates GlnA by covalent transfer of an adenylyl group from ATP to specific tyrosine residue of GlnA, thus reducing its activity. Conversely, when nitrogen levels are low, the N-terminal adenylyl removase (AR) activates GlnA by removing the adenylyl group by phosphorolysis, increasing its activity. The regulatory region of GlnE binds the signal transduction protein PII (GlnB) which indicates the nitrogen status of the cell. This chain is Bifunctional glutamine synthetase adenylyltransferase/adenylyl-removing enzyme, found in Yersinia pestis bv. Antiqua (strain Antiqua).